A 122-amino-acid polypeptide reads, in one-letter code: Large ribosomal subunit protein uL14c (122 aa).

It belongs to the universal ribosomal protein uL14 family. As to quaternary structure, part of the 50S ribosomal subunit.

The protein resides in the plastid. It is found in the chloroplast. Functionally, binds to 23S rRNA. This is Large ribosomal subunit protein uL14c from Illicium oligandrum (Star anise).